The following is a 114-amino-acid chain: UPF0145 protein TT_C1581 (114 aa).

This sequence belongs to the UPF0145 family.

The protein is UPF0145 protein TT_C1581 of Thermus thermophilus (strain ATCC BAA-163 / DSM 7039 / HB27).